The chain runs to 739 residues: NAD(P)H-quinone oxidoreductase subunit 5, chloroplastic (739 aa).

Transmembrane regions (helical) follow at residues 9 to 29 (WVIP…LILI), 39 to 59 (IWAF…VQLS), 89 to 109 (IDPL…LVLI), 125 to 145 (FVYI…SNLI), 147 to 167 (IYFF…FWFT), 185 to 205 (GDFG…SLEF), 219 to 239 (NGVN…GAVA), 258 to 278 (TPIS…FLLA), 280 to 300 (LLPL…VGTI), 327 to 347 (LGYM…FHLI), 354 to 374 (ALLF…VGYS), 396 to 416 (TTFL…CFWS), 425 to 445 (WLYS…TAFY), 542 to 562 (LFPL…GISF), 610 to 630 (TLAI…YSFF), and 719 to 739 (ISSY…FFLS).

It belongs to the complex I subunit 5 family. As to quaternary structure, NDH is composed of at least 16 different subunits, 5 of which are encoded in the nucleus.

It is found in the plastid. The protein resides in the chloroplast thylakoid membrane. It carries out the reaction a plastoquinone + NADH + (n+1) H(+)(in) = a plastoquinol + NAD(+) + n H(+)(out). The enzyme catalyses a plastoquinone + NADPH + (n+1) H(+)(in) = a plastoquinol + NADP(+) + n H(+)(out). In terms of biological role, NDH shuttles electrons from NAD(P)H:plastoquinone, via FMN and iron-sulfur (Fe-S) centers, to quinones in the photosynthetic chain and possibly in a chloroplast respiratory chain. The immediate electron acceptor for the enzyme in this species is believed to be plastoquinone. Couples the redox reaction to proton translocation, and thus conserves the redox energy in a proton gradient. This Triticum aestivum (Wheat) protein is NAD(P)H-quinone oxidoreductase subunit 5, chloroplastic (ndhF).